Consider the following 160-residue polypeptide: Nascent polypeptide-associated complex subunit beta (160 aa).

2 disordered regions span residues 16-36 (GGKG…GTDD) and 118-160 (ESYQ…TEVE). The span at 20–30 (TPRRKVKKVHK) shows a compositional bias: basic residues. Residues 33–98 (GTDDKKLQTA…GEDKELTELV (66 aa)) form the NAC-A/B domain. Over residues 124–134 (QKEKGEDGDKK) the composition is skewed to basic and acidic residues. Positions 135–145 (DDDDEDDDDIP) are enriched in acidic residues.

The protein belongs to the NAC-beta family. In terms of assembly, part of the nascent polypeptide-associated complex (NAC), consisting of EGD2 and EGD1. NAC associates with ribosomes via EGD1.

The protein localises to the cytoplasm. It localises to the nucleus. Component of the nascent polypeptide-associated complex (NAC), a dynamic component of the ribosomal exit tunnel, protecting the emerging polypeptides from interaction with other cytoplasmic proteins to ensure appropriate nascent protein targeting. The NAC complex also promotes mitochondrial protein import by enhancing productive ribosome interactions with the outer mitochondrial membrane and blocks the inappropriate interaction of ribosomes translating non-secretory nascent polypeptides with translocation sites in the membrane of the endoplasmic reticulum. EGD1 may act as a transcription factor that exert a negative effect on the expression of several genes that are transcribed by RNA polymerase II. The protein is Nascent polypeptide-associated complex subunit beta (EGD1) of Phaeosphaeria nodorum (strain SN15 / ATCC MYA-4574 / FGSC 10173) (Glume blotch fungus).